Consider the following 163-residue polypeptide: Bursicon (163 aa).

Positions 1–23 (MKSTFLVVLELAFFLLPGRVLYA) are cleaved as a signal peptide. Disulfide bonds link C39–C88, C53–C102, C63–C123, C67–C125, and C85–C128. Residues 39-129 (CQVTPVIHVL…PLECMCRPCT (91 aa)) enclose the CTCK domain.

In terms of assembly, heterodimer of burs and pburs.

The protein resides in the secreted. In terms of biological role, final heterodimeric neurohormone released at the end of the molting cycle, involved in the sclerotization (tanning) of the insect cuticle, melanization and wing spreading. In Anopheles gambiae (African malaria mosquito), this protein is Bursicon (burs124).